Reading from the N-terminus, the 932-residue chain is Lon protease homolog 2, peroxisomal (932 aa).

The 250-residue stretch at 11–260 (LSLVPLPKGS…RVVDILNKQN (250 aa)) folds into the Lon N-terminal domain. Residues 298–328 (RRGIPGASGTPPPGLGGRNNEADEKESNELD) are disordered. Basic and acidic residues predominate over residues 317 to 328 (NEADEKESNELD). 486-493 (GPPGTGKT) contacts ATP. Residues 729–916 (HGRPGVVTGL…WEAIRHIWPD (188 aa)) enclose the Lon proteolytic domain. Catalysis depends on residues serine 822 and lysine 865. The short motif at 930–932 (SRL) is the Microbody targeting signal element.

It belongs to the peptidase S16 family.

The protein resides in the peroxisome matrix. It catalyses the reaction Hydrolysis of proteins in presence of ATP.. In terms of biological role, ATP-dependent serine protease that mediates the selective degradation of misfolded and unassembled polypeptides in the peroxisomal matrix. Necessary for type 2 peroxisome targeting signal (PTS2)-containing protein processing and facilitates peroxisome matrix protein import. This Emericella nidulans (strain FGSC A4 / ATCC 38163 / CBS 112.46 / NRRL 194 / M139) (Aspergillus nidulans) protein is Lon protease homolog 2, peroxisomal.